We begin with the raw amino-acid sequence, 589 residues long: Oligo-1,6-glucosidase IMA3 (589 aa).

The active-site Nucleophile is D215. Catalysis depends on E277, which acts as the Proton donor.

It belongs to the glycosyl hydrolase 13 family.

The protein localises to the cytoplasm. The catalysed reaction is Hydrolysis of (1-&gt;6)-alpha-D-glucosidic linkages in some oligosaccharides produced from starch and glycogen by alpha-amylase, and in isomaltose.. In terms of biological role, alpha-glucosidase with broad substrate specificity for alpha-1,4- and alpha-1,6-glucosides. Not required for isomaltose utilization, but overexpression allows the IMA1 null mutant to grow on isomaltose. The chain is Oligo-1,6-glucosidase IMA3 (IMA3) from Saccharomyces cerevisiae (strain ATCC 204508 / S288c) (Baker's yeast).